Here is a 377-residue protein sequence, read N- to C-terminus: Palmitoyltransferase PFA4 (377 aa).

Over 1–9 (MAIKLKNRW) the chain is Cytoplasmic. Residues 10–30 (LGVAIPAFLVALIGYGSHYFI) form a helical membrane-spanning segment. Topologically, residues 31-122 (LSNFLSWNEQ…NCVGHSNFPH (92 aa)) are lumenal. The DHHC domain maps to 78-128 (NYCKKCRVYKPERAHHCKTCNQCVLAMDHHCPWTLNCVGHSNFPHFMRFLF). Residue C108 is the S-palmitoyl cysteine intermediate of the active site. Residues 123 to 143 (FMRFLFWVIFSTAYLLFLLIG) traverse the membrane as a helical segment. Residues 144–163 (RIYLLWSIRHTAFHHRSTSE) lie on the Cytoplasmic side of the membrane. Residues 164–184 (IIFICIMTPMDAFVLLTVSSL) traverse the membrane as a helical segment. Residues 185-377 (LGRCIYNQCL…SDFGVDTELE (193 aa)) are Lumenal-facing.

The protein belongs to the DHHC palmitoyltransferase family. PFA4 subfamily.

The protein resides in the endoplasmic reticulum membrane. It catalyses the reaction L-cysteinyl-[protein] + hexadecanoyl-CoA = S-hexadecanoyl-L-cysteinyl-[protein] + CoA. Functionally, mediates the reversible addition of palmitate to target proteins, thereby regulating their membrane association and biological function. The protein is Palmitoyltransferase PFA4 of Kluyveromyces lactis (strain ATCC 8585 / CBS 2359 / DSM 70799 / NBRC 1267 / NRRL Y-1140 / WM37) (Yeast).